The chain runs to 1888 residues: E3 ubiquitin-protein ligase UPL3 (1888 aa).

A compositionally biased stretch (basic and acidic residues) spans 1-10; that stretch reads METRSRKRAE. Residues 1–157 form a disordered region; the sequence is METRSRKRAE…NGGFMHPNMS (157 aa). Positions 41–81 are enriched in low complexity; it reads LSSSSSSSLAPTPPSSSTTTRSRSSRSAAAAAPMDTSTDSS. A compositionally biased stretch (basic and acidic residues) spans 97 to 124; that stretch reads NSDKGKEKEHDVRIRERERERDRAREQL. The segment covering 137-146 has biased composition (acidic residues); the sequence is DEDDDNDSED. ARM repeat units follow at residues 227 to 267, 270 to 310, 312 to 349, and 351 to 390; these read EDSL…HLCD, PSSC…KISQ, HPTA…NMCK, and LPSD…RIAE. Disordered stretches follow at residues 660-711, 970-1119, 1134-1157, and 1280-1307; these read KPSH…IGAN, ALKP…LPMC, DDDG…GAAA, and RLSV…VESQ. Residues 986-1002 are compositionally biased toward low complexity; it reads PSGAGVSSPSSSTPAST. The span at 1019–1029 shows a compositional bias: basic and acidic residues; sequence TSKKDPVHEKG. Residues 1076-1113 show a composition bias toward acidic residues; it reads SSEDEELEISPVDIDDALVIEEDDISDDEDDDNEDVLD. 2 stretches are compositionally biased toward low complexity: residues 1148–1157 and 1286–1303; these read ASGGTSGAAA and ASST…TNSS. The K-box stretch occupies residues 1377–1451; that stretch reads AKVPLDEFVN…ALNRLQQQQG (75 aa). Positions 1490–1888 constitute an HECT domain; the sequence is MYSSQKAVLE…NEGQGSFDLS (399 aa). The Glycyl thioester intermediate role is filled by Cys-1855.

It belongs to the UPL family. K-HECT subfamily. In terms of tissue distribution, widely expressed.

The enzyme catalyses S-ubiquitinyl-[E2 ubiquitin-conjugating enzyme]-L-cysteine + [acceptor protein]-L-lysine = [E2 ubiquitin-conjugating enzyme]-L-cysteine + N(6)-ubiquitinyl-[acceptor protein]-L-lysine.. Its pathway is protein modification; protein ubiquitination. In terms of biological role, probable E3 ubiquitin-protein ligase which mediates ubiquitination and subsequent proteasomal degradation of target proteins. Involved in the repression of endoreduplication process and the cell morphogenesis in the trichomes. The chain is E3 ubiquitin-protein ligase UPL3 (UPL3) from Arabidopsis thaliana (Mouse-ear cress).